A 133-amino-acid polypeptide reads, in one-letter code: Holo-[acyl-carrier-protein] synthase (133 aa).

Residues D8 and E56 each coordinate Mg(2+).

This sequence belongs to the P-Pant transferase superfamily. AcpS family. Mg(2+) serves as cofactor.

Its subcellular location is the cytoplasm. It catalyses the reaction apo-[ACP] + CoA = holo-[ACP] + adenosine 3',5'-bisphosphate + H(+). Transfers the 4'-phosphopantetheine moiety from coenzyme A to a Ser of acyl-carrier-protein. The sequence is that of Holo-[acyl-carrier-protein] synthase from Deinococcus radiodurans (strain ATCC 13939 / DSM 20539 / JCM 16871 / CCUG 27074 / LMG 4051 / NBRC 15346 / NCIMB 9279 / VKM B-1422 / R1).